Consider the following 676-residue polypeptide: Protein TAPT1 homolog (676 aa).

The interval 1-44 (MNATLNSAGGKRQLRFRGDVTGSRVEELHHQQQEEQKQKAPLAQ) is disordered. Over residues 24–38 (RVEELHHQQQEEQKQ) the composition is skewed to basic and acidic residues. The next 6 membrane-spanning stretches (helical) occupy residues 128-148 (SFLY…WALV), 170-190 (EICD…MLLV), 249-269 (VLTH…LIMF), 346-366 (FCVM…IDWV), 414-434 (GFIP…AVSF), and 437-457 (LAAW…RICL). The disordered stretch occupies residues 625–676 (SGDGVTSAKAKKATQRLPKRTHKRSESEPGMPSMVEKGGAAGIAGGNQTTQL). Over residues 633 to 647 (KAKKATQRLPKRTHK) the composition is skewed to basic residues.

Belongs to the TAPT1 family.

It is found in the membrane. This is Protein TAPT1 homolog from Drosophila melanogaster (Fruit fly).